Consider the following 602-residue polypeptide: Elongation factor 4 (602 aa).

In terms of domain architecture, tr-type G spans 7–189; that stretch reads KYIRNFSIVA…AIVNKVPAPD (183 aa). GTP is bound by residues 19–24 and 136–139; these read DHGKST and NKID.

Belongs to the TRAFAC class translation factor GTPase superfamily. Classic translation factor GTPase family. LepA subfamily.

The protein localises to the cell membrane. It carries out the reaction GTP + H2O = GDP + phosphate + H(+). Its function is as follows. Required for accurate and efficient protein synthesis under certain stress conditions. May act as a fidelity factor of the translation reaction, by catalyzing a one-codon backward translocation of tRNAs on improperly translocated ribosomes. Back-translocation proceeds from a post-translocation (POST) complex to a pre-translocation (PRE) complex, thus giving elongation factor G a second chance to translocate the tRNAs correctly. Binds to ribosomes in a GTP-dependent manner. The chain is Elongation factor 4 from Clostridium botulinum (strain 657 / Type Ba4).